The chain runs to 415 residues: Serine hydroxymethyltransferase (415 aa).

(6S)-5,6,7,8-tetrahydrofolate contacts are provided by residues Leu-117 and 121–123 (GHL). Lys-225 is subject to N6-(pyridoxal phosphate)lysine. 349-351 (SPF) is a binding site for (6S)-5,6,7,8-tetrahydrofolate.

It belongs to the SHMT family. As to quaternary structure, homodimer. Pyridoxal 5'-phosphate serves as cofactor.

Its subcellular location is the cytoplasm. It carries out the reaction (6R)-5,10-methylene-5,6,7,8-tetrahydrofolate + glycine + H2O = (6S)-5,6,7,8-tetrahydrofolate + L-serine. It functions in the pathway one-carbon metabolism; tetrahydrofolate interconversion. It participates in amino-acid biosynthesis; glycine biosynthesis; glycine from L-serine: step 1/1. Functionally, catalyzes the reversible interconversion of serine and glycine with tetrahydrofolate (THF) serving as the one-carbon carrier. This reaction serves as the major source of one-carbon groups required for the biosynthesis of purines, thymidylate, methionine, and other important biomolecules. Also exhibits THF-independent aldolase activity toward beta-hydroxyamino acids, producing glycine and aldehydes, via a retro-aldol mechanism. In Nitratiruptor sp. (strain SB155-2), this protein is Serine hydroxymethyltransferase.